We begin with the raw amino-acid sequence, 301 residues long: Sulfate adenylyltransferase subunit 2 (301 aa).

The interval 278–301 (ERQGRLIDGDEPASMERKKREGYF) is disordered.

This sequence belongs to the PAPS reductase family. CysD subfamily. As to quaternary structure, sulfate-activating enzymes, NodP and NodQ, may be physically associated.

The catalysed reaction is sulfate + ATP + H(+) = adenosine 5'-phosphosulfate + diphosphate. Functionally, proposed to provide activated sulfate for transfer to nod factor. This Azospirillum brasilense protein is Sulfate adenylyltransferase subunit 2 (nodP).